Here is a 99-residue protein sequence, read N- to C-terminus: Ferredoxin-2 (99 aa).

A 2Fe-2S ferredoxin-type domain is found at 4–96 (YQVRLINKKR…DCTIRTHQEA (93 aa)). 4 residues coordinate [2Fe-2S] cluster: Cys-42, Cys-47, Cys-50, and Cys-80.

This sequence belongs to the 2Fe2S plant-type ferredoxin family. [2Fe-2S] cluster serves as cofactor.

Its function is as follows. Ferredoxins are iron-sulfur proteins that transfer electrons in a wide variety of metabolic reactions. Donates electrons to the nitrogenase. This is Ferredoxin-2 (fdxH) from Leptolyngbya boryana (Plectonema boryanum).